The chain runs to 314 residues: Olfactory receptor 5G9 (314 aa).

Topologically, residues 1-25 are extracellular; it reads MADENYTRITEFIFIGLRYHPNLQV. An N-linked (GlcNAc...) asparagine glycan is attached at N5. The helical transmembrane segment at 26–46 threads the bilayer; the sequence is FLFLLFLLFYLVTMTGNLGMI. Over 47-54 the chain is Cytoplasmic; that stretch reads ILIRVDSR. The chain crosses the membrane as a helical span at residues 55-75; it reads LHTPMYFFLSHLSFVDICFSS. Topologically, residues 76 to 99 are extracellular; the sequence is VVAPKMLTDFFADKKAISFLGCVL. A disulfide bond links C97 and C189. Residues 100–120 traverse the membrane as a helical segment; sequence QQWFFGFFVAIECLLLASMAY. The Cytoplasmic segment spans residues 121–133; it reads DRYVAICNPLLYS. A helical transmembrane segment spans residues 134–154; it reads VAMSQRLCIQLVIGPYAVGFF. The Extracellular portion of the chain corresponds to 155 to 196; sequence NTMTHTTAAFRLPFCGSNIINHFFCDMSPILSLICADIRINK. A helical membrane pass occupies residues 197–217; it reads LLVFIVAGAVLIVSSTTIIVS. Over 218 to 237 the chain is Cytoplasmic; the sequence is YFHILIAILRIRSAEGRRKA. A helical membrane pass occupies residues 238–258; it reads FSTCSSHVTAVSILYGTLFFI. The Extracellular segment spans residues 259-271; that stretch reads YVRPSAISSLDLN. The chain crosses the membrane as a helical span at residues 272–292; the sequence is KVVSVFYTAVIPMLNPLIYSL. Residues 293 to 314 lie on the Cytoplasmic side of the membrane; sequence RNKEVKSAMGRTVAKAKVFLKN.

It belongs to the G-protein coupled receptor 1 family.

It is found in the cell membrane. Functionally, potential odorant receptor. This chain is Olfactory receptor 5G9, found in Mus musculus (Mouse).